Reading from the N-terminus, the 283-residue chain is Small aggregate formation protein (283 aa).

Its subcellular location is the cytoplasm. Functionally, knockout of the gene for this protein causes small aggregate formation. May regulate the secretion or processing of a secreted factor that regulates aggregate size. This chain is Small aggregate formation protein (smlA), found in Dictyostelium discoideum (Social amoeba).